We begin with the raw amino-acid sequence, 145 residues long: Large ribosomal subunit protein bL19 (145 aa).

The span at isoleucine 114 to alanine 136 shows a compositional bias: basic and acidic residues. Positions isoleucine 114–glutamate 145 are disordered.

This sequence belongs to the bacterial ribosomal protein bL19 family.

Its function is as follows. This protein is located at the 30S-50S ribosomal subunit interface and may play a role in the structure and function of the aminoacyl-tRNA binding site. This is Large ribosomal subunit protein bL19 from Methylocella silvestris (strain DSM 15510 / CIP 108128 / LMG 27833 / NCIMB 13906 / BL2).